The chain runs to 115 residues: NADH-ubiquinone oxidoreductase chain 3 (115 aa).

3 helical membrane passes run 3–23 (FMLT…IAFW), 55–75 (FFLV…LLPL), and 84–104 (LEVM…SLAY).

This sequence belongs to the complex I subunit 3 family. As to quaternary structure, core subunit of respiratory chain NADH dehydrogenase (Complex I) which is composed of 45 different subunits. Interacts with TMEM186. Interacts with TMEM242.

The protein resides in the mitochondrion inner membrane. The catalysed reaction is a ubiquinone + NADH + 5 H(+)(in) = a ubiquinol + NAD(+) + 4 H(+)(out). Its function is as follows. Core subunit of the mitochondrial membrane respiratory chain NADH dehydrogenase (Complex I) which catalyzes electron transfer from NADH through the respiratory chain, using ubiquinone as an electron acceptor. Essential for the catalytic activity of complex I. This Rhinolophus pumilus (Horseshoe bat) protein is NADH-ubiquinone oxidoreductase chain 3.